The sequence spans 74 residues: Progonadoliberin-3 (74 aa).

The signal sequence occupies residues 1-15 (VQVVVLALVAQVTLS). Glutamine 16 carries the post-translational modification Pyrrolidone carboxylic acid. At glycine 25 the chain carries Glycine amide.

It belongs to the GnRH family.

The protein localises to the secreted. Functionally, stimulates the secretion of gonadotropins. The protein is Progonadoliberin-3 (gnrh3) of Oncorhynchus mykiss (Rainbow trout).